We begin with the raw amino-acid sequence, 362 residues long: Protein Tob1 (362 aa).

The Bipartite nuclear localization signal signature appears at 22–39 (RRRVNIFGEELERLLKKK). The important for nuclear localization stretch occupies residues 82–92 (VRGNLPQDLSV). Residues 144-160 (DPASSVSSSPSPPFGHS) are compositionally biased toward low complexity. The interval 144-171 (DPASSVSSSPSPPFGHSAAVSPTFMPRS) is disordered. Positions 161 to 220 (AAVSPTFMPRSTQPLTFTTATFAATKFGSTKMKNSGRSSKVARTSPINLGLTVNVNDLLK) are required for interaction with CPEB3. At Thr204 the chain carries Phosphothreonine. The Nuclear export signal signature appears at 228 to 236 (VHSLYGLGL). The tract at residues 234–284 (LGLGSQQQPQPQPQQQQQQQPSSSQPPPPLPQQQQQQPQQQQQQQQQTSAL) is disordered. Composition is skewed to low complexity over residues 238 to 256 (SQQQPQPQPQQQQQQQPSS) and 265 to 280 (QQQQQQPQQQQQQQQQ).

This sequence belongs to the BTG family. As to quaternary structure, interacts with ERBB2. Interacts with CNOT7. Interacts with CPEB3 (via C-terminal RNA-binding region); recruits CNOT7 to CPEB3 to form a ternary complex required for mRNA deadenylation and decay. Interacts with CNOT8. Interacts with CPEB4. Post-translationally, phosphorylated on Ser and Thr residues. In terms of tissue distribution, ubiquitous.

It localises to the cytoplasm. The protein localises to the nucleus. In terms of biological role, anti-proliferative protein; the function is mediated by association with deadenylase subunits of the CCR4-NOT complex. Mediates CPEB3-accelerated mRNA deadenylation by binding to CPEB3 and recruiting CNOT7 which leads to target mRNA deadenylation and decay. The polypeptide is Protein Tob1 (Tob1) (Mus musculus (Mouse)).